The following is a 322-amino-acid chain: Glycerate dehydrogenase (322 aa).

NAD(+)-binding positions include 158 to 159, Asp178, 239 to 241, and Asp265; these read SI and TAR. The active site involves Arg241. The active site involves Glu270. His288 functions as the Proton donor in the catalytic mechanism. 288-291 lines the NAD(+) pocket; that stretch reads HIGS.

This sequence belongs to the D-isomer specific 2-hydroxyacid dehydrogenase family. In terms of assembly, homodimer.

It carries out the reaction (R)-glycerate + NAD(+) = 3-hydroxypyruvate + NADH + H(+). Its pathway is one-carbon metabolism; formaldehyde assimilation via serine pathway. Functionally, active on hydroxypyruvate and glyoxylate. The sequence is that of Glycerate dehydrogenase from Hyphomicrobium methylovorum.